A 386-amino-acid polypeptide reads, in one-letter code: Alkanesulfonate monooxygenase (386 aa).

This sequence belongs to the SsuD family.

The enzyme catalyses an alkanesulfonate + FMNH2 + O2 = an aldehyde + FMN + sulfite + H2O + 2 H(+). In terms of biological role, catalyzes the desulfonation of aliphatic sulfonates. The polypeptide is Alkanesulfonate monooxygenase (Delftia acidovorans (strain DSM 14801 / SPH-1)).